The sequence spans 285 residues: Pantothenate synthetase (285 aa).

30–37 (MGYLHAGH) contributes to the ATP binding site. The active-site Proton donor is the histidine 37. A (R)-pantoate-binding site is contributed by glutamine 61. Residue glutamine 61 coordinates beta-alanine. 147–150 (GQKD) contributes to the ATP binding site. (R)-pantoate is bound at residue glutamine 153. ATP contacts are provided by residues valine 176 and 184–187 (LSSR).

The protein belongs to the pantothenate synthetase family. Homodimer.

Its subcellular location is the cytoplasm. The catalysed reaction is (R)-pantoate + beta-alanine + ATP = (R)-pantothenate + AMP + diphosphate + H(+). It participates in cofactor biosynthesis; (R)-pantothenate biosynthesis; (R)-pantothenate from (R)-pantoate and beta-alanine: step 1/1. Functionally, catalyzes the condensation of pantoate with beta-alanine in an ATP-dependent reaction via a pantoyl-adenylate intermediate. In Solidesulfovibrio magneticus (strain ATCC 700980 / DSM 13731 / RS-1) (Desulfovibrio magneticus), this protein is Pantothenate synthetase.